The following is a 289-amino-acid chain: 4-diphosphocytidyl-2-C-methyl-D-erythritol kinase (289 aa).

Lys-10 is a catalytic residue. Residue 94–104 participates in ATP binding; the sequence is PVAAGLAGGSS. Asp-136 is a catalytic residue.

This sequence belongs to the GHMP kinase family. IspE subfamily.

It catalyses the reaction 4-CDP-2-C-methyl-D-erythritol + ATP = 4-CDP-2-C-methyl-D-erythritol 2-phosphate + ADP + H(+). Its pathway is isoprenoid biosynthesis; isopentenyl diphosphate biosynthesis via DXP pathway; isopentenyl diphosphate from 1-deoxy-D-xylulose 5-phosphate: step 3/6. In terms of biological role, catalyzes the phosphorylation of the position 2 hydroxy group of 4-diphosphocytidyl-2C-methyl-D-erythritol. This is 4-diphosphocytidyl-2-C-methyl-D-erythritol kinase from Bacillus cytotoxicus (strain DSM 22905 / CIP 110041 / 391-98 / NVH 391-98).